The primary structure comprises 233 residues: Ribosome maturation factor RimP (233 aa).

The span at 167–179 (RGKAAEREKKRDL) shows a compositional bias: basic and acidic residues. Residues 167-233 (RGKAAEREKK…RARRGEIDPD (67 aa)) are disordered. A compositionally biased stretch (low complexity) spans 187–196 (PHAKPAAQAK). Over residues 220–233 (LAADRARRGEIDPD) the composition is skewed to basic and acidic residues.

The protein belongs to the RimP family.

The protein resides in the cytoplasm. Its function is as follows. Required for maturation of 30S ribosomal subunits. The sequence is that of Ribosome maturation factor RimP from Bradyrhizobium sp. (strain ORS 278).